The following is a 164-amino-acid chain: CDP-archaeol synthase (164 aa).

4 helical membrane-spanning segments follow: residues 3-23, 53-73, 77-97, and 126-146; these read LFVFFALIWPPYVANGSAVLA, GLAIGVVLGTVVGYLPNLLHP, LLDALILSVAALLGDLLGAFI, and SLYADVPVEYIIAASVVTPII.

This sequence belongs to the CDP-archaeol synthase family. The cofactor is Mg(2+).

It localises to the cell membrane. It carries out the reaction 2,3-bis-O-(geranylgeranyl)-sn-glycerol 1-phosphate + CTP + H(+) = CDP-2,3-bis-O-(geranylgeranyl)-sn-glycerol + diphosphate. It participates in membrane lipid metabolism; glycerophospholipid metabolism. Catalyzes the formation of CDP-2,3-bis-(O-geranylgeranyl)-sn-glycerol (CDP-archaeol) from 2,3-bis-(O-geranylgeranyl)-sn-glycerol 1-phosphate (DGGGP) and CTP. This reaction is the third ether-bond-formation step in the biosynthesis of archaeal membrane lipids. The sequence is that of CDP-archaeol synthase from Pyrobaculum arsenaticum (strain DSM 13514 / JCM 11321 / PZ6).